The sequence spans 517 residues: Cobyric acid synthase (517 aa).

A GATase cobBQ-type domain is found at 253–453; that stretch reads EVEIAVIKLP…IHGILDNDSL (201 aa). Cys-334 serves as the catalytic Nucleophile. His-445 is a catalytic residue.

Belongs to the CobB/CobQ family. CobQ subfamily.

Its pathway is cofactor biosynthesis; adenosylcobalamin biosynthesis. Catalyzes amidations at positions B, D, E, and G on adenosylcobyrinic A,C-diamide. NH(2) groups are provided by glutamine, and one molecule of ATP is hydrogenolyzed for each amidation. The sequence is that of Cobyric acid synthase from Moorella thermoacetica (strain ATCC 39073 / JCM 9320).